The sequence spans 147 residues: D-aminoacyl-tRNA deacylase (147 aa).

The Gly-cisPro motif, important for rejection of L-amino acids motif lies at 136-137 (GP).

The protein belongs to the DTD family. In terms of assembly, homodimer.

Its subcellular location is the cytoplasm. It carries out the reaction glycyl-tRNA(Ala) + H2O = tRNA(Ala) + glycine + H(+). The enzyme catalyses a D-aminoacyl-tRNA + H2O = a tRNA + a D-alpha-amino acid + H(+). In terms of biological role, an aminoacyl-tRNA editing enzyme that deacylates mischarged D-aminoacyl-tRNAs. Also deacylates mischarged glycyl-tRNA(Ala), protecting cells against glycine mischarging by AlaRS. Acts via tRNA-based rather than protein-based catalysis; rejects L-amino acids rather than detecting D-amino acids in the active site. By recycling D-aminoacyl-tRNA to D-amino acids and free tRNA molecules, this enzyme counteracts the toxicity associated with the formation of D-aminoacyl-tRNA entities in vivo and helps enforce protein L-homochirality. This Streptococcus pyogenes serotype M6 (strain ATCC BAA-946 / MGAS10394) protein is D-aminoacyl-tRNA deacylase.